We begin with the raw amino-acid sequence, 278 residues long: Large ribosomal subunit protein uL2c (278 aa).

Disordered stretches follow at residues 32-56 (SLTS…HRGG) and 203-256 (QSIG…PTIG). The segment covering 209–220 (GSKRWQGKRPKV) has biased composition (basic residues).

The protein belongs to the universal ribosomal protein uL2 family. As to quaternary structure, part of the 50S ribosomal subunit.

The protein localises to the plastid. The protein resides in the chloroplast. This chain is Large ribosomal subunit protein uL2c (rpl2), found in Chara vulgaris (Common stonewort).